A 268-amino-acid chain; its full sequence is Thiazole synthase (268 aa).

Catalysis depends on K96, which acts as the Schiff-base intermediate with DXP. 1-deoxy-D-xylulose 5-phosphate-binding positions include G157, 185-186, and 207-208; these read AG and NT. The interval 238 to 268 is disordered; the sequence is PMRPREAASPSSPVEGVPFTPTGPRPGRGPQ. Residues 258–268 are compositionally biased toward pro residues; that stretch reads PTGPRPGRGPQ.

The protein belongs to the ThiG family. As to quaternary structure, homotetramer. Forms heterodimers with either ThiH or ThiS.

It is found in the cytoplasm. It catalyses the reaction [ThiS sulfur-carrier protein]-C-terminal-Gly-aminoethanethioate + 2-iminoacetate + 1-deoxy-D-xylulose 5-phosphate = [ThiS sulfur-carrier protein]-C-terminal Gly-Gly + 2-[(2R,5Z)-2-carboxy-4-methylthiazol-5(2H)-ylidene]ethyl phosphate + 2 H2O + H(+). Its pathway is cofactor biosynthesis; thiamine diphosphate biosynthesis. In terms of biological role, catalyzes the rearrangement of 1-deoxy-D-xylulose 5-phosphate (DXP) to produce the thiazole phosphate moiety of thiamine. Sulfur is provided by the thiocarboxylate moiety of the carrier protein ThiS. In vitro, sulfur can be provided by H(2)S. The chain is Thiazole synthase from Thermus thermophilus (strain ATCC 27634 / DSM 579 / HB8).